Reading from the N-terminus, the 671-residue chain is tRNA(Met) cytidine acetyltransferase TmcA (671 aa).

Residues Q180, 202–211, and R319 contribute to the ATP site; that span reads GRGKSALAGQ. In terms of domain architecture, N-acetyltransferase spans 349–531; sequence IRFSAFTQAL…SGCYTAMALL (183 aa). Residues 461 to 463, 468 to 474, E499, and R506 contribute to the acetyl-CoA site; these read IAV and QREGIGQ.

This sequence belongs to the RNA cytidine acetyltransferase family. TmcA subfamily.

The protein localises to the cytoplasm. It catalyses the reaction cytidine(34) in elongator tRNA(Met) + acetyl-CoA + ATP + H2O = N(4)-acetylcytidine(34) in elongator tRNA(Met) + ADP + phosphate + CoA + H(+). Functionally, catalyzes the formation of N(4)-acetylcytidine (ac(4)C) at the wobble position of tRNA(Met), by using acetyl-CoA as an acetyl donor and ATP (or GTP). The protein is tRNA(Met) cytidine acetyltransferase TmcA of Citrobacter koseri (strain ATCC BAA-895 / CDC 4225-83 / SGSC4696).